The following is a 64-amino-acid chain: Large ribosomal subunit protein bL35 (64 aa).

Residues 1 to 42 (MPKAKTHSGASKRFRRTGTGKIVRQKANRRHLLEHKPTKRTR) show a composition bias toward basic residues. A disordered region spans residues 1–64 (MPKAKTHSGA…NSRINKLLNG (64 aa)). Residues 48–58 (TTVSAADNSRI) show a composition bias toward polar residues.

The protein belongs to the bacterial ribosomal protein bL35 family.

This is Large ribosomal subunit protein bL35 from Mycolicibacterium smegmatis (strain ATCC 700084 / mc(2)155) (Mycobacterium smegmatis).